The chain runs to 749 residues: Meiotically up-regulated gene 122 protein (749 aa).

At 1-20 the chain is on the cytoplasmic side; the sequence is MYRKWDLCITRHLLPYIEHS. A helical; Signal-anchor for type II membrane protein membrane pass occupies residues 21–41; the sequence is VIPIIALLVLSLIFYILYICF. The Lumenal segment spans residues 42–749; it reads GTTSYILSGI…LLSNALRSII (708 aa). The region spanning 88-261 is the PXA domain; it reads PPELEAPLQL…CIILYFSSSE (174 aa). The PX domain maps to 311–422; that stretch reads LHYQFLKEAS…KFFAKSMRSH (112 aa). Disordered regions lie at residues 439–489 and 504–546; these read QSSS…LSQQ and GSCT…PPKP. Polar residues-rich tracts occupy residues 440 to 461 and 475 to 489; these read SSSV…NKTS and LSHQ…LSQQ.

The protein belongs to the sorting nexin family.

The protein resides in the endoplasmic reticulum membrane. Its function is as follows. Has a role in meiosis. The polypeptide is Meiotically up-regulated gene 122 protein (mug122) (Schizosaccharomyces pombe (strain 972 / ATCC 24843) (Fission yeast)).